Reading from the N-terminus, the 170-residue chain is uncharacterized protein (170 aa).

Positions 25-151 constitute a VOC domain; it reads PALSPHLVVD…FGHHWSLGQP (127 aa).

This is an uncharacterized protein from Mycobacterium tuberculosis (strain CDC 1551 / Oshkosh).